The chain runs to 550 residues: Probable acyl-activating enzyme 6 (550 aa).

This sequence belongs to the ATP-dependent AMP-binding enzyme family. As to expression, expressed at low levels in roots, leaves, stems and developing seeds.

Functionally, may act as an acid--thiol ligase that activates carboxylic acids by forming acyl-CoAs. The polypeptide is Probable acyl-activating enzyme 6 (AAE6) (Arabidopsis thaliana (Mouse-ear cress)).